A 972-amino-acid polypeptide reads, in one-letter code: mRNA transport regulator MTR10 (972 aa).

It localises to the nucleus. Involved in mRNA transport from nucleus to cytoplasm. The protein is mRNA transport regulator MTR10 (MTR10) of Saccharomyces cerevisiae (strain ATCC 204508 / S288c) (Baker's yeast).